Here is an 801-residue protein sequence, read N- to C-terminus: Na(+)/H(+) antiporter subunit A1 (801 aa).

A run of 21 helical transmembrane segments spans residues 4 to 25 (LHIA…YRFF), 30 to 49 (LGWF…LTLI), 79 to 101 (LGLL…SIGY), 108 to 127 (LGNF…GVVL), 131 to 153 (VIIL…SFWR), 166 to 188 (LIIT…IPTQ), 208 to 230 (FIFA…PFYI), 243 to 265 (SAYL…MTPI), 270 to 289 (QGWV…WASL), 302 to 324 (AFST…ISYH), 339 to 361 (AAIF…TGAV), 373 to 395 (LGGL…LSMA), 429 to 451 (YLFP…KFIM), 472 to 494 (ILML…FPGI), 526 to 548 (AFLS…SYWV), 589 to 611 (NNLV…SVPF), 621 to 641 (IRIF…LILF), 646 to 668 (LFSI…FFKA), 672 to 694 (ALTQ…YHLP), 707 to 729 (LTNA…IAYG), and 767 to 784 (LFES…YTMI).

It belongs to the CPA3 antiporters (TC 2.A.63) subunit A family. May form a heterooligomeric complex that consists of seven subunits: mnhA1, mnhB1, mnhC1, mnhD1, mnhE1, mnhF1 and mnhG1.

It localises to the cell membrane. Its activity is regulated as follows. Na(+) extrusion is completely inhibited by the H(+) conductor carbonyl cyanide m-chlorophenylhydrazone (CCCP). Its function is as follows. Mnh complex is a Na(+)Li(+)/H(+) antiporter involved in Na(+) and/or Li(+) excretion. Na(+)/H(+) antiport consumes a transmembrane electrical potential, and is thus inferred to be electrogenic. Does not transport K(+), Ca(2+) or Mg(2+). This chain is Na(+)/H(+) antiporter subunit A1 (mnhA1), found in Staphylococcus aureus.